Consider the following 34-residue polypeptide: Mu-theraphotoxin-CCy1a (34 aa).

Intrachain disulfides connect cysteine 3–cysteine 18, cysteine 10–cysteine 23, and cysteine 17–cysteine 30.

It belongs to the neurotoxin 10 (Hwtx-1) family. 14 (Hntx-1) subfamily. In terms of tissue distribution, expressed by the venom gland.

The protein resides in the secreted. In terms of biological role, voltage-gated sodium channel Nav1.7/SCN9A inhibitor. The polypeptide is Mu-theraphotoxin-CCy1a (Chromatopelma cyaneopubescens (Greenbottle blue tarantula)).